The sequence spans 82 residues: ATP synthase subunit c, chloroplastic (82 aa).

A run of 2 helical transmembrane segments spans residues 7–27 (AASV…PGIG) and 57–77 (LAFM…LLFA).

Belongs to the ATPase C chain family. In terms of assembly, F-type ATPases have 2 components, F(1) - the catalytic core - and F(0) - the membrane proton channel. F(1) has five subunits: alpha(3), beta(3), gamma(1), delta(1), epsilon(1). F(0) has four main subunits: a(1), b(1), b'(1) and c(10-14). The alpha and beta chains form an alternating ring which encloses part of the gamma chain. F(1) is attached to F(0) by a central stalk formed by the gamma and epsilon chains, while a peripheral stalk is formed by the delta, b and b' chains.

The protein resides in the plastid. The protein localises to the chloroplast thylakoid membrane. Its function is as follows. F(1)F(0) ATP synthase produces ATP from ADP in the presence of a proton or sodium gradient. F-type ATPases consist of two structural domains, F(1) containing the extramembraneous catalytic core and F(0) containing the membrane proton channel, linked together by a central stalk and a peripheral stalk. During catalysis, ATP synthesis in the catalytic domain of F(1) is coupled via a rotary mechanism of the central stalk subunits to proton translocation. Key component of the F(0) channel; it plays a direct role in translocation across the membrane. A homomeric c-ring of between 10-14 subunits forms the central stalk rotor element with the F(1) delta and epsilon subunits. This Guillardia theta (Cryptophyte) protein is ATP synthase subunit c, chloroplastic.